The following is a 174-amino-acid chain: Disulfide bond formation protein B (174 aa).

Residues 1 to 12 (MLNWIDTAPRRI) lie on the Cytoplasmic side of the membrane. A helical transmembrane segment spans residues 13–29 (LALISAACVAMLAFGMY). Residues 30 to 47 (LQHVVGLEPCPMCIVQRY) are Periplasmic-facing. Cysteine 39 and cysteine 42 are disulfide-bonded. Residues 48–64 (ALIGVAVFAGLASARGQ) traverse the membrane as a helical segment. At 65–69 (KGWWM) the chain is on the cytoplasmic side. A helical membrane pass occupies residues 70-87 (TWSVLALVAAGFGAFVAA). Residues 88-143 (RQSWLQWYPPEIATCGRDFYGMIENYPISRAIPMIFRGSGDCTAVDWTFLGGSIAN) lie on the Periplasmic side of the membrane. Cysteines 102 and 129 form a disulfide. The helical transmembrane segment at 144–162 (WSFVWFLLFAVLLLVLLVR) threads the bilayer. Residues 163–174 (GGRGAPDTLARA) lie on the Cytoplasmic side of the membrane.

The protein belongs to the DsbB family.

The protein localises to the cell inner membrane. Its function is as follows. Required for disulfide bond formation in some periplasmic proteins. Acts by oxidizing the DsbA protein. This Acidovorax sp. (strain JS42) protein is Disulfide bond formation protein B.